A 694-amino-acid polypeptide reads, in one-letter code: Ferric reductase transmembrane component 5 (694 aa).

The signal sequence occupies residues 1–19 (MLFARLVLLLVYLAPGSLA). At 20 to 163 (KPASTKKRTQ…LDNIDKGNVY (144 aa)) the chain is on the extracellular side. Residue Asn117 is glycosylated (N-linked (GlcNAc...) asparagine). Residues 164–184 (GVTICLYWIGVLFIAAVYHFL) form a helical membrane-spanning segment. Residues 185 to 222 (NFSRLKQTVFKNKVSAFLRGHYVLPALVHNHAMSVGRW) are Cytoplasmic-facing. A helical membrane pass occupies residues 223–243 (FFIGLVPTRLETLVLFGYVLL). Topologically, residues 244–267 (HGFLLSSYNFDHNELLSDRRSQVL) are extracellular. The chain crosses the membrane as a helical span at residues 268-288 (IFLSDRAGILAFAHFPLIVLF). A Ferric oxidoreductase domain is found at 274-408 (AGILAFAHFP…GWGEWIMACA (135 aa)). The Cytoplasmic portion of the chain corresponds to 289-311 (GGKNSTMTWLTGIRYTAFITYHK). His310 and His324 together coordinate heme. Residues 312 to 334 (WLGRFMLVDCTIHAIGYTYHAYI) traverse the membrane as a helical segment. Residues 335 to 347 (ENYWKYVKYSDLW) are Extracellular-facing. A helical transmembrane segment spans residues 348 to 368 (TSGRHAMIIVGILVFFSFFFF). Topologically, residues 369–371 (RRH) are cytoplasmic. The chain crosses the membrane as a helical span at residues 372-392 (YYELFVITHIILAIGFFHACW). Heme contacts are provided by His380 and His394. The Extracellular portion of the chain corresponds to 393 to 403 (KHCYKLGWGEW). The helical transmembrane segment at 404–424 (IMACALFWIADRILRLIKIAI) threads the bilayer. The FAD-binding FR-type domain occupies 409-528 (LFWIADRILR…EGPYGQSTRT (120 aa)). The Cytoplasmic segment spans residues 425–694 (FGMPWAKLKL…IEYVEEFQNW (270 aa)). Position 473–479 (473–479 (HPFTVMD)) interacts with FAD. Residues 520-523 (GPYG) and 660-661 (CG) contribute to the NADP(+) site.

The protein belongs to the ferric reductase (FRE) family. Requires FAD as cofactor.

Its subcellular location is the cell membrane. It catalyses the reaction 2 a Fe(II)-siderophore + NADP(+) + H(+) = 2 a Fe(III)-siderophore + NADPH. Functionally, metalloreductase responsible for reducing extracellular iron and copper prior to import. Catalyzes the reductive uptake of Fe(3+)-salts and Fe(3+) bound to catecholate or hydroxamate siderophores. Fe(3+) is reduced to Fe(2+), which then dissociates from the siderophore and can be imported by the high-affinity Fe(2+) transport complex in the plasma membrane. The polypeptide is Ferric reductase transmembrane component 5 (FRE5) (Saccharomyces cerevisiae (strain ATCC 204508 / S288c) (Baker's yeast)).